Consider the following 308-residue polypeptide: uncharacterized protein (308 aa).

Composition is skewed to polar residues over residues 138–148 and 205–229; these read WSFTKHGSNTP and STSH…QPPS. Disordered regions lie at residues 138–157 and 205–235; these read WSFT…PLCN and STSH…TDAS.

Its subcellular location is the cytoplasm. This is an uncharacterized protein from Schizosaccharomyces pombe (strain 972 / ATCC 24843) (Fission yeast).